The chain runs to 242 residues: Spiralin (242 aa).

The N-terminal stretch at 1 to 23 is a signal peptide; the sequence is MKKLLSILAVFGVSAVGTTSVVA. C24 carries N-palmitoyl cysteine lipidation. Residue C24 is the site of S-diacylglycerol cysteine attachment.

It belongs to the spiralin family. As to quaternary structure, seems to occur as dimer, tetramers, and large oligomers of identical chains. Palmitate and stearate are the major lipid components.

It is found in the cell membrane. Major membrane protein of spiroplasma. The sequence is that of Spiralin (spi) from Spiroplasma melliferum.